Here is a 412-residue protein sequence, read N- to C-terminus: rRNA methyltransferase 1, mitochondrial (412 aa).

Residues 1–20 (MTSLTNAVFKRYLAVTPSAH) constitute a mitochondrion transit peptide.

This sequence belongs to the class IV-like SAM-binding methyltransferase superfamily. RNA methyltransferase TrmH family.

It is found in the mitochondrion. It catalyses the reaction guanosine(2270) in 21S rRNA + S-adenosyl-L-methionine = 2'-O-methylguanosine(2270) in 21S rRNA + S-adenosyl-L-homocysteine + H(+). In terms of biological role, S-adenosyl-L-methionine-dependent 2'-O-ribose methyltransferase that catalyzes the formation of 2'-O-methylguanosine at position 2270 (Gm2270) in the 21S mitochondrial large subunit ribosomal RNA (mtLSU rRNA), a universally conserved modification in the peptidyl transferase domain of the mtLSU rRNA. This modification seems to be important for the normal accumulation of the mitochondrial large ribosomal subunit. The protein is rRNA methyltransferase 1, mitochondrial of Saccharomyces cerevisiae (strain ATCC 204508 / S288c) (Baker's yeast).